Here is a 98-residue protein sequence, read N- to C-terminus: NADH-ubiquinone oxidoreductase chain 4L (98 aa).

A run of 3 helical transmembrane segments spans residues 1 to 21, 26 to 46, and 59 to 79; these read MTPTHFSLNAAFMLGLAGLTF, LLSALLCLEGMMLSLFISMAL, and APMLLLAFSACEASAGLALLV.

This sequence belongs to the complex I subunit 4L family. As to quaternary structure, core subunit of respiratory chain NADH dehydrogenase (Complex I) which is composed of 45 different subunits.

It localises to the mitochondrion inner membrane. It catalyses the reaction a ubiquinone + NADH + 5 H(+)(in) = a ubiquinol + NAD(+) + 4 H(+)(out). Functionally, core subunit of the mitochondrial membrane respiratory chain NADH dehydrogenase (Complex I) which catalyzes electron transfer from NADH through the respiratory chain, using ubiquinone as an electron acceptor. Part of the enzyme membrane arm which is embedded in the lipid bilayer and involved in proton translocation. This Danio rerio (Zebrafish) protein is NADH-ubiquinone oxidoreductase chain 4L (mt-nd4l).